Consider the following 302-residue polypeptide: Citrate lyase subunit beta (302 aa).

Residues Arg69 and Glu132 each contribute to the substrate site. Positions 132 and 159 each coordinate Mg(2+).

Belongs to the HpcH/HpaI aldolase family. Citrate lyase beta subunit subfamily. In terms of assembly, oligomer with a subunit composition of (alpha,beta,gamma)6. Mg(2+) serves as cofactor.

It is found in the cytoplasm. It catalyses the reaction citrate = oxaloacetate + acetate. The catalysed reaction is (3S)-citryl-CoA = oxaloacetate + acetyl-CoA. Functionally, represents a citryl-ACP lyase. The protein is Citrate lyase subunit beta (citE) of Leuconostoc mesenteroides subsp. cremoris.